Consider the following 83-residue polypeptide: Exodeoxyribonuclease 7 small subunit (83 aa).

It belongs to the XseB family. Heterooligomer composed of large and small subunits.

It is found in the cytoplasm. The catalysed reaction is Exonucleolytic cleavage in either 5'- to 3'- or 3'- to 5'-direction to yield nucleoside 5'-phosphates.. Bidirectionally degrades single-stranded DNA into large acid-insoluble oligonucleotides, which are then degraded further into small acid-soluble oligonucleotides. This is Exodeoxyribonuclease 7 small subunit from Aeromonas salmonicida (strain A449).